Consider the following 153-residue polypeptide: Aspartate carbamoyltransferase regulatory chain (153 aa).

Zn(2+)-binding residues include Cys-109, Cys-114, Cys-138, and Cys-141.

The protein belongs to the PyrI family. In terms of assembly, contains catalytic and regulatory chains. Zn(2+) serves as cofactor.

In terms of biological role, involved in allosteric regulation of aspartate carbamoyltransferase. The protein is Aspartate carbamoyltransferase regulatory chain of Cronobacter sakazakii (strain ATCC BAA-894) (Enterobacter sakazakii).